We begin with the raw amino-acid sequence, 170 residues long: Two-component response regulator ORR6 (170 aa).

Residues 51 to 170 enclose the Response regulatory domain; it reads HVLAVDDSSV…DVSRLCSRIR (120 aa). The residue at position 103 (Asp103) is a 4-aspartylphosphate.

This sequence belongs to the ARR family. Type-A subfamily. In terms of processing, two-component system major event consists of a His-to-Asp phosphorelay between a sensor histidine kinase (HK) and a response regulator (RR). In plants, the His-to-Asp phosphorelay involves an additional intermediate named Histidine-containing phosphotransfer protein (HPt). This multistep phosphorelay consists of a His-Asp-His-Asp sequential transfer of a phosphate group between first a His and an Asp of the HK protein, followed by the transfer to a conserved His of the HPt protein and finally the transfer to an Asp in the receiver domain of the RR protein. In terms of tissue distribution, expressed in roots, leaf blades, leaf sheaths, shoot apex, flowers and panicles.

In terms of biological role, functions as a response regulator involved in His-to-Asp phosphorelay signal transduction system. Phosphorylation of the Asp residue in the receiver domain activates the ability of the protein to promote the transcription of target genes. Type-A response regulators seem to act as negative regulators of the cytokinin signaling. In Oryza sativa subsp. japonica (Rice), this protein is Two-component response regulator ORR6.